Consider the following 169-residue polypeptide: MSSIQKKCLICCNIGEEELLQACDCPSRVHHTCLQSHIQCFKSSHCTFCEKKYKIMVMCNSLKKCSSPVLEQANWIVLCVCVSTLLCILCILLDICLTIRLWQSSVLCYEVYNTFYFLVLCGTFSIAFYLAAWYDIFFEFHSLCSFIWNLKKISQSYPCEASKNALKIL.

This is an uncharacterized protein from Saimiriine herpesvirus 2 (strain 11) (SaHV-2).